A 342-amino-acid polypeptide reads, in one-letter code: Protein-glutamate methylesterase/protein-glutamine glutaminase 1 (342 aa).

In terms of domain architecture, Response regulatory spans 2–119 (RVAIVNDMPL…GDPKAAAQRL (118 aa)). Asp-53 carries the 4-aspartylphosphate modification. The 184-residue stretch at 146 to 329 (SDTDAALVVI…LPLGDIAPRL (184 aa)) folds into the CheB-type methylesterase domain. Active-site residues include Ser-158, His-185, and Asp-278.

The protein belongs to the CheB family. Post-translationally, phosphorylated by CheA. Phosphorylation of the N-terminal regulatory domain activates the methylesterase activity.

It localises to the cytoplasm. The enzyme catalyses [protein]-L-glutamate 5-O-methyl ester + H2O = L-glutamyl-[protein] + methanol + H(+). It carries out the reaction L-glutaminyl-[protein] + H2O = L-glutamyl-[protein] + NH4(+). Functionally, involved in chemotaxis. Part of a chemotaxis signal transduction system that modulates chemotaxis in response to various stimuli. Catalyzes the demethylation of specific methylglutamate residues introduced into the chemoreceptors (methyl-accepting chemotaxis proteins or MCP) by CheR. Also mediates the irreversible deamidation of specific glutamine residues to glutamic acid. This is Protein-glutamate methylesterase/protein-glutamine glutaminase 1 from Bordetella avium (strain 197N).